A 382-amino-acid polypeptide reads, in one-letter code: Homoserine O-succinyltransferase (382 aa).

An AB hydrolase-1 domain is found at Asn51–Leu359. Catalysis depends on Ser157, which acts as the Nucleophile. Arg227 contacts substrate. Active-site residues include Asp322 and His355. Asp356 is a binding site for substrate.

It belongs to the AB hydrolase superfamily. MetX family. In terms of assembly, homodimer.

The protein resides in the cytoplasm. It catalyses the reaction L-homoserine + succinyl-CoA = O-succinyl-L-homoserine + CoA. Its pathway is amino-acid biosynthesis; L-methionine biosynthesis via de novo pathway; O-succinyl-L-homoserine from L-homoserine: step 1/1. Its function is as follows. Transfers a succinyl group from succinyl-CoA to L-homoserine, forming succinyl-L-homoserine. The sequence is that of Homoserine O-succinyltransferase from Halorhodospira halophila (strain DSM 244 / SL1) (Ectothiorhodospira halophila (strain DSM 244 / SL1)).